A 111-amino-acid polypeptide reads, in one-letter code: uncharacterized protein (111 aa).

This is an uncharacterized protein from Schizosaccharomyces pombe (strain 972 / ATCC 24843) (Fission yeast).